Here is a 498-residue protein sequence, read N- to C-terminus: ATP synthase subunit beta, chloroplastic (498 aa).

Phosphothreonine is present on Thr6. Ser13 bears the Phosphoserine mark. 172-179 (GGAGVGKT) provides a ligand contact to ATP.

Belongs to the ATPase alpha/beta chains family. In terms of assembly, F-type ATPases have 2 components, CF(1) - the catalytic core - and CF(0) - the membrane proton channel. CF(1) has five subunits: alpha(3), beta(3), gamma(1), delta(1), epsilon(1). CF(0) has four main subunits: a(1), b(1), b'(1) and c(9-12).

It localises to the plastid. It is found in the chloroplast thylakoid membrane. It catalyses the reaction ATP + H2O + 4 H(+)(in) = ADP + phosphate + 5 H(+)(out). Produces ATP from ADP in the presence of a proton gradient across the membrane. The catalytic sites are hosted primarily by the beta subunits. This is ATP synthase subunit beta, chloroplastic from Nasturtium officinale (Watercress).